A 507-amino-acid polypeptide reads, in one-letter code: uncharacterized protein (507 aa).

The next 12 helical transmembrane spans lie at 46-66 (WIVL…WIGY), 83-103 (AWLS…AMWA), 112-132 (AVLI…ISSL), 141-161 (FPIC…IMFL), 181-201 (IGVM…PAIV), 207-227 (VIWL…IATF), 263-283 (IILL…YTVM), 299-319 (VCAA…SIFV), 328-348 (TLKI…QLTL), 354-374 (VILG…YPIG), 389-409 (TSTG…VFIM), and 442-462 (MSIM…VVLF). Basic and acidic residues predominate over residues 477–493 (ATADKAKELSNQNKDRI). Residues 477-507 (ATADKAKELSNQNKDRITLQAESAVEPLQKK) are disordered.

It is found in the membrane. This is an uncharacterized protein from Caenorhabditis elegans.